We begin with the raw amino-acid sequence, 932 residues long: DNA mismatch repair protein MutS (932 aa).

615–622 (GPNMAGKS) is an ATP binding site.

The protein belongs to the DNA mismatch repair MutS family.

Its function is as follows. This protein is involved in the repair of mismatches in DNA. It is possible that it carries out the mismatch recognition step. This protein has a weak ATPase activity. The chain is DNA mismatch repair protein MutS from Clostridium botulinum (strain Langeland / NCTC 10281 / Type F).